Consider the following 261-residue polypeptide: MGMKKKLSLGVASAALGLALVGGGTWAAFNDIKSKDATFASGTLDLSAKENSASVNLSNLKPGDKLTKDFQFENNGSLAIKEVLMALNYGDFKANGGSNTSPEDFLSQFEVTLLTVGKEGGNGYPKNIILDDANLKDLYLMSAKNDAAAAEKIKKQIDPKFLNASGKVNVATIDGKTAPEYDGVPKTPTDFDQVQMEIQFKDDKTKDEKGLMVQNKYQGNSIKLQFSFEATQWNGLTIKKDHTDKDGYVKENEKAHSEDKN.

The first 27 residues, 1–27, serve as a signal peptide directing secretion; sequence MGMKKKLSLGVASAALGLALVGGGTWA. A disordered region spans residues 241-261; that stretch reads DHTDKDGYVKENEKAHSEDKN.

Belongs to the peptidase M73 family. In terms of assembly, forms fibers. Fibers have variable length and are 10-15 nm width. Interacts with obg (AC P20964) in pull-down experiments.

Its subcellular location is the secreted. It is found in the forespore intermembrane space. In terms of biological role, tasA is the major protein component of the biofilm extracellular matrix. It forms amyloid fibers that bind cells together in the biofilm. Exhibits an antibacterial activity against a variety of Gram-positive and Gram-negative bacteria. In laboratory strains, is also involved in proper spore coat assembly. This chain is Major biofilm matrix component, found in Bacillus subtilis (strain 168).